The chain runs to 453 residues: Ribulose bisphosphate carboxylase large chain (453 aa).

The propeptide occupies Met-1 to Ser-2. Pro-3 carries the N-acetylproline modification. N6,N6,N6-trimethyllysine is present on Lys-14. Residues Asn-123 and Thr-173 each coordinate substrate. Residue Lys-175 is the Proton acceptor of the active site. Lys-177 provides a ligand contact to substrate. Residues Lys-201, Asp-203, and Glu-204 each coordinate Mg(2+). Position 201 is an N6-carboxylysine (Lys-201). The active-site Proton acceptor is His-294. Positions 295, 327, and 379 each coordinate substrate.

This sequence belongs to the RuBisCO large chain family. Type I subfamily. Heterohexadecamer of 8 large chains and 8 small chains; disulfide-linked. The disulfide link is formed within the large subunit homodimers. Requires Mg(2+) as cofactor. The disulfide bond which can form in the large chain dimeric partners within the hexadecamer appears to be associated with oxidative stress and protein turnover.

Its subcellular location is the plastid. It localises to the chloroplast. It catalyses the reaction 2 (2R)-3-phosphoglycerate + 2 H(+) = D-ribulose 1,5-bisphosphate + CO2 + H2O. The enzyme catalyses D-ribulose 1,5-bisphosphate + O2 = 2-phosphoglycolate + (2R)-3-phosphoglycerate + 2 H(+). Functionally, ruBisCO catalyzes two reactions: the carboxylation of D-ribulose 1,5-bisphosphate, the primary event in carbon dioxide fixation, as well as the oxidative fragmentation of the pentose substrate in the photorespiration process. Both reactions occur simultaneously and in competition at the same active site. In Galium palustre (Common marsh bedstraw), this protein is Ribulose bisphosphate carboxylase large chain.